Here is a 507-residue protein sequence, read N- to C-terminus: ATP synthase subunit alpha (507 aa).

170 to 177 contributes to the ATP binding site; the sequence is GDRQTGKT.

It belongs to the ATPase alpha/beta chains family. As to quaternary structure, F-type ATPases have 2 components, CF(1) - the catalytic core - and CF(0) - the membrane proton channel. CF(1) has five subunits: alpha(3), beta(3), gamma(1), delta(1), epsilon(1). CF(0) has three main subunits: a(1), b(2) and c(9-12). The alpha and beta chains form an alternating ring which encloses part of the gamma chain. CF(1) is attached to CF(0) by a central stalk formed by the gamma and epsilon chains, while a peripheral stalk is formed by the delta and b chains.

It localises to the cell inner membrane. It carries out the reaction ATP + H2O + 4 H(+)(in) = ADP + phosphate + 5 H(+)(out). Functionally, produces ATP from ADP in the presence of a proton gradient across the membrane. The alpha chain is a regulatory subunit. This is ATP synthase subunit alpha from Fervidobacterium nodosum (strain ATCC 35602 / DSM 5306 / Rt17-B1).